Consider the following 398-residue polypeptide: 1-deoxy-D-xylulose 5-phosphate reductoisomerase (398 aa).

Positions 10, 11, 12, 13, 38, and 124 each coordinate NADPH. Lysine 125 is a 1-deoxy-D-xylulose 5-phosphate binding site. Glutamate 126 contributes to the NADPH binding site. Residue aspartate 150 participates in Mn(2+) binding. 1-deoxy-D-xylulose 5-phosphate contacts are provided by serine 151, glutamate 152, serine 176, and histidine 199. Residue glutamate 152 participates in Mn(2+) binding. NADPH is bound at residue glycine 205. Residues serine 212, asparagine 217, lysine 218, and glutamate 221 each contribute to the 1-deoxy-D-xylulose 5-phosphate site. Residue glutamate 221 participates in Mn(2+) binding.

The protein belongs to the DXR family. Mg(2+) serves as cofactor. Requires Mn(2+) as cofactor.

It catalyses the reaction 2-C-methyl-D-erythritol 4-phosphate + NADP(+) = 1-deoxy-D-xylulose 5-phosphate + NADPH + H(+). The protein operates within isoprenoid biosynthesis; isopentenyl diphosphate biosynthesis via DXP pathway; isopentenyl diphosphate from 1-deoxy-D-xylulose 5-phosphate: step 1/6. In terms of biological role, catalyzes the NADPH-dependent rearrangement and reduction of 1-deoxy-D-xylulose-5-phosphate (DXP) to 2-C-methyl-D-erythritol 4-phosphate (MEP). This Rippkaea orientalis (strain PCC 8801 / RF-1) (Cyanothece sp. (strain PCC 8801)) protein is 1-deoxy-D-xylulose 5-phosphate reductoisomerase.